Reading from the N-terminus, the 283-residue chain is MSDRSAVLPQYLFPKQALTNFAGWVAGKERGAVTTWIIRRFVAKYGVDMGEALESDINHYKSFNQFFTRALKPGVRPLAQADLVCPVDGAISQFGAIEGDQIFQAKGHNYSTTALVGGDAVLAARFAHGSFATLYLSPKDYHRIHMPCDGRLVRMIHVPGDLFSVNPVTARGVPGLFARNERVVCVFESAHGPFVLVLVGATIVGSMATVWHGVVNPPRGGELREWHYADQQILLKQGEEMGRFLLGSTVVMLFPPPPLAFNPDWAPTRPVRLGEAMANLANL.

Active-site charge relay system; for autoendoproteolytic cleavage activity residues include Asp88, His145, and Ser248. Ser248 functions as the Schiff-base intermediate with substrate; via pyruvic acid; for decarboxylase activity in the catalytic mechanism. Ser248 bears the Pyruvic acid (Ser); by autocatalysis mark.

Belongs to the phosphatidylserine decarboxylase family. PSD-B subfamily. Prokaryotic type I sub-subfamily. In terms of assembly, heterodimer of a large membrane-associated beta subunit and a small pyruvoyl-containing alpha subunit. Pyruvate serves as cofactor. Is synthesized initially as an inactive proenzyme. Formation of the active enzyme involves a self-maturation process in which the active site pyruvoyl group is generated from an internal serine residue via an autocatalytic post-translational modification. Two non-identical subunits are generated from the proenzyme in this reaction, and the pyruvate is formed at the N-terminus of the alpha chain, which is derived from the carboxyl end of the proenzyme. The autoendoproteolytic cleavage occurs by a canonical serine protease mechanism, in which the side chain hydroxyl group of the serine supplies its oxygen atom to form the C-terminus of the beta chain, while the remainder of the serine residue undergoes an oxidative deamination to produce ammonia and the pyruvoyl prosthetic group on the alpha chain. During this reaction, the Ser that is part of the protease active site of the proenzyme becomes the pyruvoyl prosthetic group, which constitutes an essential element of the active site of the mature decarboxylase.

Its subcellular location is the cell membrane. It carries out the reaction a 1,2-diacyl-sn-glycero-3-phospho-L-serine + H(+) = a 1,2-diacyl-sn-glycero-3-phosphoethanolamine + CO2. It participates in phospholipid metabolism; phosphatidylethanolamine biosynthesis; phosphatidylethanolamine from CDP-diacylglycerol: step 2/2. Catalyzes the formation of phosphatidylethanolamine (PtdEtn) from phosphatidylserine (PtdSer). In Variovorax paradoxus (strain S110), this protein is Phosphatidylserine decarboxylase proenzyme.